Reading from the N-terminus, the 426-residue chain is Probable inactive metalloprotease YmfF (426 aa).

Residues His50 and Glu138 each coordinate Zn(2+).

It belongs to the peptidase M16 family.

This Bacillus subtilis (strain 168) protein is Probable inactive metalloprotease YmfF (ymfF).